The primary structure comprises 362 residues: Olfactory receptor 5AU1 (362 aa).

The Extracellular segment spans residues 1–79 (MTEFHLQSQM…TDPQLQRLLF (79 aa)). Asparagine 56 carries an N-linked (GlcNAc...) asparagine glycan. Residues 80–100 (VVFLGMYTATLLGNLVMFLLI) traverse the membrane as a helical segment. The Cytoplasmic portion of the chain corresponds to 101 to 116 (HVSATLHTPMYSLLKS). Residues 117–139 (LSFLDFCYSSTVVPQTLVNFLAK) form a helical membrane-spanning segment. Over 140–150 (RKVISYFGCMT) the chain is Extracellular. Cysteines 148 and 230 form a disulfide. Residues 151–171 (QMFFYAGFATSECYLIAAMAY) traverse the membrane as a helical segment. Topologically, residues 172-194 (DRYAAICNPLLYSTIMSPEVCAS) are cytoplasmic. The helical transmembrane segment at 195-215 (LIVGSYSAGFLNSLIHTGCIF) threads the bilayer. The Extracellular segment spans residues 216 to 247 (SLKFCGAHVVTHFFCDGPPILSLSCVDTSLCE). A helical membrane pass occupies residues 248 to 268 (ILLFIFAGFNLLSCTLTILIS). Residues 269–290 (YFLILNTILKMSSAQGRFKAFS) are Cytoplasmic-facing. Residues 291 to 311 (TCASHLTAICLFFGTTLFMYL) form a helical membrane-spanning segment. The Extracellular portion of the chain corresponds to 312–322 (RPRSSYSLTQD). Residues 323–343 (RTVAVIYTVVIPVLNPLMYSL) traverse the membrane as a helical segment. At 344–362 (RNKDVKKALIKVWGRKTME) the chain is on the cytoplasmic side.

Belongs to the G-protein coupled receptor 1 family.

The protein localises to the cell membrane. Its function is as follows. Odorant receptor. In Homo sapiens (Human), this protein is Olfactory receptor 5AU1 (OR5AU1).